Reading from the N-terminus, the 411-residue chain is Heterogeneous nuclear ribonucleoprotein 1 (411 aa).

Residues 6–82 (GKLFVGGISW…REVDVKRAMS (77 aa)) enclose the RRM 1 domain. 3 disordered regions span residues 81-103 (MSREEQQVSGRTGNLNTSRSSGG), 183-221 (KRALPKDANPGGGGRSMGGGGSGGYQGYGGNESSYDGRM), and 358-411 (AAYG…RQGQ). Residues 87-101 (QVSGRTGNLNTSRSS) are compositionally biased toward polar residues. The RRM 2 domain occupies 110–187 (KKIFVGGLPP…KQVEVKRALP (78 aa)). Gly residues-rich tracts occupy residues 192–212 (PGGGGRSMGGGGSGGYQGYGG), 362–387 (VVGGRPSGGGSNNPGSGGYMGGGYGD), and 397–411 (GYGGGYNDGQGRQGQ). Residues 341–390 (GYGYGGYSGSDSGYGNQAAYGVVGGRPSGGGSNNPGSGGYMGGGYGDGSW) form a nuclear targeting sequence (M9) region.

Component of the spliceosome. Interacts with TRN1.

It localises to the nucleus. The protein resides in the cytoplasm. Functionally, involved with pre-mRNA processing. Forms complexes (ribonucleosomes) with at least 20 other different hnRNP and heterogeneous nuclear RNA in the nucleus. Its function is as follows. Involved in the packaging of pre-mRNA into hnRNP particles, transport of poly(A) mRNA from the nucleus to the cytoplasm and may modulate splice site selection. The chain is Heterogeneous nuclear ribonucleoprotein 1 (RNP1) from Arabidopsis thaliana (Mouse-ear cress).